The sequence spans 833 residues: cGMP-specific 3',5'-cyclic phosphodiesterase (833 aa).

Serine 60 is subject to Phosphoserine. The disordered stretch occupies residues phenylalanine 82–serine 101. 2 GAF domains span residues aspartate 122–leucine 272 and serine 304–isoleucine 461. The 325-residue stretch at glutamate 494–glutamine 818 folds into the PDEase domain. The active-site Proton donor is histidine 571. Residues histidine 575, histidine 611, aspartate 612, and aspartate 722 each contribute to the Zn(2+) site. Aspartate 612 is a Mg(2+) binding site. Glutamine 775 contributes to the 3',5'-cyclic GMP binding site.

The protein belongs to the cyclic nucleotide phosphodiesterase family. It depends on Zn(2+) as a cofactor. Mg(2+) is required as a cofactor. In terms of processing, phosphorylation is regulated by binding of cGMP to the two allosteric sites. Phosphorylation by PRKG1 leads to its activation.

It carries out the reaction 3',5'-cyclic GMP + H2O = GMP + H(+). It participates in purine metabolism; 3',5'-cyclic GMP degradation; GMP from 3',5'-cyclic GMP: step 1/1. In terms of biological role, plays a role in signal transduction by regulating the intracellular concentration of cyclic nucleotides. This phosphodiesterase catalyzes the specific hydrolysis of cGMP to 5'-GMP. Specifically regulates nitric-oxide-generated cGMP. This Rattus norvegicus (Rat) protein is cGMP-specific 3',5'-cyclic phosphodiesterase (Pde5a).